A 113-amino-acid chain; its full sequence is Ribosome-binding factor A (113 aa).

It belongs to the RbfA family. Monomer. Binds 30S ribosomal subunits, but not 50S ribosomal subunits or 70S ribosomes.

The protein resides in the cytoplasm. Functionally, one of several proteins that assist in the late maturation steps of the functional core of the 30S ribosomal subunit. Associates with free 30S ribosomal subunits (but not with 30S subunits that are part of 70S ribosomes or polysomes). Required for efficient processing of 16S rRNA. May interact with the 5'-terminal helix region of 16S rRNA. The chain is Ribosome-binding factor A from Mycoplasmopsis agalactiae (strain NCTC 10123 / CIP 59.7 / PG2) (Mycoplasma agalactiae).